A 102-amino-acid chain; its full sequence is Small ribosomal subunit protein uS10 (102 aa).

This sequence belongs to the universal ribosomal protein uS10 family. As to quaternary structure, part of the 30S ribosomal subunit.

In terms of biological role, involved in the binding of tRNA to the ribosomes. The polypeptide is Small ribosomal subunit protein uS10 (Thermococcus kodakarensis (strain ATCC BAA-918 / JCM 12380 / KOD1) (Pyrococcus kodakaraensis (strain KOD1))).